The primary structure comprises 366 residues: Inhibin alpha chain (366 aa).

An N-terminal signal peptide occupies residues 1–18 (MVLHLLLFLLLTPQGGHS). Residues 19 to 61 (CQGLELARELVLAKVRALFLDALGPPAVTREGGDPGVRRLPRR) constitute a propeptide that is removed on maturation. The propeptide at 62 to 232 (HALGGFTHRG…PPSGGERARR (171 aa)) is inhibin alpha N-terminal region. Residues Asn146 and Asn268 are each glycosylated (N-linked (GlcNAc...) asparagine). Disulfide bonds link Cys262/Cys328, Cys291/Cys363, and Cys295/Cys365. N-linked (GlcNAc...) asparagine; partial glycosylation occurs at Asn302.

This sequence belongs to the TGF-beta family. As to quaternary structure, dimeric, linked by one or more disulfide bonds. Activin B is a dimer of alpha and beta-B. Inhibin A is a dimer of alpha and beta-A. Inhibin B is a dimer of alpha and beta-B. Interacts with TGFBR3L; this interaction regulates female fertility. In terms of processing, proteolytic processing yields a number of bioactive forms. The 20/23 kDa forms consist solely of the mature alpha chain, the 26/29 kDa forms consist of the most N-terminal propeptide linked through a disulfide bond to the mature alpha chain, the 50/53 kDa forms encompass the entire proprotein. Each type can be furthermore either mono- or diglycosylated, causing the mass difference. In terms of tissue distribution, originally found in ovary (granulosa cells) and testis (Sertoli cells), but widely distributed in many tissues including brain and placenta. In adrenal cortex expression is limited to the zona reticularis and the innermost zona fasciculata in the normal gland, extending centripetally into the zona fasciculata in hyperplasia. Also found in adrenocortical tumors. Also expressed in prostate epithelium of benign prostatic hyperplasia, in regions of basal cell hyperplasia and in nonmalignant regions of high grade prostate cancer. Only circulating inhibin B is found in male, whereas circulating inhibins A and B are found in female.

The protein localises to the secreted. Inhibins and activins inhibit and activate, respectively, the secretion of follitropin by the pituitary gland. Inhibins/activins are involved in regulating a number of diverse functions such as hypothalamic and pituitary hormone secretion, gonadal hormone secretion, germ cell development and maturation, erythroid differentiation, insulin secretion, nerve cell survival, embryonic axial development or bone growth, depending on their subunit composition. Inhibins appear to oppose the functions of activins. Functionally, inhibin A is a dimer of alpha/INHA and beta-A/INHBA that functions as a feedback regulator in the hypothalamic-pituitary-gonadal (HPG) axis. Inhibits the secretion of FSH from the anterior pituitary gland by acting on pituitary gonadotrope cells. Antagonizes activin A by binding to the proteoglycan, betaglycan, and forming a stable complex with and, thereby, sequestering type II activin receptors while excluding type I receptor. Its function is as follows. Inhibin B is a dimer of alpha and beta-B that plays a crucial role in the regulation of the reproductive system by inhibiting the secretion of follicle-stimulating hormone (FSH) from the anterior pituitary gland. Thereby, maintains reproductive homeostasis in both males and females. Acts as a more potent suppressor of FSH release than inhibin A. Functions as competitive receptor antagonist binding activin type II receptors with high affinity in the presence of the TGF-beta type III coreceptor/TGFBR3L. The chain is Inhibin alpha chain (INHA) from Homo sapiens (Human).